The sequence spans 267 residues: Hydroxyethylthiazole kinase (267 aa).

A substrate-binding site is contributed by Met44. Residues Arg120 and Thr165 each contribute to the ATP site. Gly192 lines the substrate pocket.

Belongs to the Thz kinase family. The cofactor is Mg(2+).

The enzyme catalyses 5-(2-hydroxyethyl)-4-methylthiazole + ATP = 4-methyl-5-(2-phosphooxyethyl)-thiazole + ADP + H(+). Its pathway is cofactor biosynthesis; thiamine diphosphate biosynthesis; 4-methyl-5-(2-phosphoethyl)-thiazole from 5-(2-hydroxyethyl)-4-methylthiazole: step 1/1. Catalyzes the phosphorylation of the hydroxyl group of 4-methyl-5-beta-hydroxyethylthiazole (THZ). The polypeptide is Hydroxyethylthiazole kinase (Carboxydothermus hydrogenoformans (strain ATCC BAA-161 / DSM 6008 / Z-2901)).